Consider the following 95-residue polypeptide: Protein IDA-LIKE 2 (95 aa).

A signal peptide spans 1–35 (MSSRNQRSRITSSFFVSFFTRTILLLLILLLGFCN). Positions 75–95 (ASGPSRKHNDIGLLSWHRSSP) are disordered.

In terms of tissue distribution, expressed in leaves, buds, flowers, seedlings and seeds. Detected at the base of pedicel, in the floral and funicule abscission zones and in vascular tissues.

The protein localises to the secreted. The protein resides in the extracellular space. Functionally, may be involved in floral abscission. The protein is Protein IDA-LIKE 2 (IDL2) of Arabidopsis thaliana (Mouse-ear cress).